Reading from the N-terminus, the 238-residue chain is MTRRYWNISLEEMMEAGVHFGHGTRKWNPRMAPYISAKRKGIHITNLTRTARFLSEACDLVFDAASRGKHFLIVGTKDKAADSVASAAIRARCHYVNKKWLGGMSTNWSTTETRLHKFRDLRVRAEMGQLSRLPKRDAAILKRQLSHFQTYLGGIKYMTGLPDIVIIIDQQEEYTALRECVTLGIPTICLIDTNCDPDLADIPIPANDDAIASIRLILNKLVSAICQGRSSYSYIRSR.

It belongs to the universal ribosomal protein uS2 family.

It localises to the plastid. It is found in the chloroplast. This Nuphar advena (Common spatterdock) protein is Small ribosomal subunit protein uS2c (rps2).